Reading from the N-terminus, the 390-residue chain is Na(+)/H(+) antiporter NhaA (390 aa).

12 helical membrane passes run 14–34 (AAGG…ANLN), 61–81 (MLLW…GLEV), 97–117 (SLPV…YLAF), 126–146 (AGWA…LALL), 156–176 (VFLM…IALF), 181–201 (LSMV…VLNL), 221–241 (VLKS…FVPL), 256–276 (ALHP…NAGV), 280–300 (GVTL…GLFI), 305–325 (GISL…PPGV), 330–350 (ILAV…IASL), and 362–382 (WAKL…YALL).

This sequence belongs to the NhaA Na(+)/H(+) (TC 2.A.33) antiporter family.

The protein resides in the cell inner membrane. The enzyme catalyses Na(+)(in) + 2 H(+)(out) = Na(+)(out) + 2 H(+)(in). In terms of biological role, na(+)/H(+) antiporter that extrudes sodium in exchange for external protons. The protein is Na(+)/H(+) antiporter NhaA of Cronobacter sakazakii (strain ATCC BAA-894) (Enterobacter sakazakii).